Here is a 347-residue protein sequence, read N- to C-terminus: Core-capsid bridging protein (347 aa).

Residues 290 to 320 are disordered; it reads GYRGTTFQRRATAPSRRRGPSRRRRRRKATL. Residues 304-318 are compositionally biased toward basic residues; sequence SRRRGPSRRRRRRKA.

Belongs to the adenoviridae core-capsid bridging protein family. In terms of assembly, monomer. Homodimer. Exists in equilibrium between monomers and dimers in solution. Interacts with the histone-like nucleoprotein; this interactions bridge the virus core to the capsid. Interacts with core protein X; this interactions bridge the virus core to the capsid. Interacts with the endosome lysis protein VI; this interactions bridge the virus core to the capsid. Interacts with the peripentonal hexons. Interacts with host NPM1; this interaction might play a role in virus assembly.

The protein localises to the virion. It localises to the host nucleus. The protein resides in the host nucleolus. Its function is as follows. Associates loosely with the viral DNA to form an outer shell around the nucleoprotein-DNA complex and links it with the capsid by binding the endosome lysis protein. Dissociates from the viral genome during entry. Might be involved in nuclear capsid assembly of the viral particles through its association with NPM1/nucleophosmin. The protein is Core-capsid bridging protein of Homo sapiens (Human).